A 154-amino-acid chain; its full sequence is Ribosome maturation factor RimP (154 aa).

It belongs to the RimP family.

The protein localises to the cytoplasm. Functionally, required for maturation of 30S ribosomal subunits. The sequence is that of Ribosome maturation factor RimP from Haemophilus ducreyi (strain 35000HP / ATCC 700724).